Here is a 405-residue protein sequence, read N- to C-terminus: Farnesyl pyrophosphate synthase (405 aa).

Mg(2+) is bound by residues aspartate 158 and aspartate 162. Residues 158 to 162 (DDLAD) carry the DDXXD motif motif.

This sequence belongs to the FPP/GGPP synthase family. It depends on Mg(2+) as a cofactor.

It carries out the reaction isopentenyl diphosphate + (2E)-geranyl diphosphate = (2E,6E)-farnesyl diphosphate + diphosphate. Its pathway is pheromone biosynthesis. Functionally, farnesyl pyrophosphate synthase involved in murgantiol biosynthesis, a male-released aggregation pheromone, by catalyzing the formation of (2E,6E)-farnesyl diphosphate. This chain is Farnesyl pyrophosphate synthase, found in Murgantia histrionica (Harlequin bug).